Here is a 132-residue protein sequence, read N- to C-terminus: Agouti-signaling protein (132 aa).

The signal sequence occupies residues 1–22; that stretch reads MDVTRLLLATLLVFLCFFTAYS. N39 carries an N-linked (GlcNAc...) asparagine glycan. The tract at residues 58-88 is disordered; the sequence is KSKQMSRKEAEKKRSSKKEASMKKVARPRTP. Over residues 63-79 the composition is skewed to basic and acidic residues; that stretch reads SRKEAEKKRSSKKEASM. 5 cysteine pairs are disulfide-bonded: C93–C108, C100–C114, C107–C125, C111–C132, and C116–C123. An Agouti domain is found at 93–132; the sequence is CVATRDSCKPPAPACCDPCASCQCRFFRSACSCRVLSLNC.

The protein resides in the secreted. In terms of biological role, involved in the regulation of melanogenesis. The binding of ASP to MC1R precludes alpha-MSH initiated signaling and thus blocks production of cAMP, leading to a down-regulation of eumelanogenesis (brown/black pigment) and thus increasing synthesis of pheomelanin (yellow/red pigment). This is Agouti-signaling protein (ASIP) from Cercopithecus mitis (Blue monkey).